The following is a 315-amino-acid chain: Neuroguidin (315 aa).

At Ala2 the chain carries N-acetylalanine. Positions 13–41 form a coiled coil; sequence SAVTLLKNLQEQVMAVTAQVKSLTQKVQA. The segment at 41 to 174 is necessary for interaction with EIF4E; sequence AGAYPTEKGL…KGVSKKYVPP (134 aa). Residues Ser121, Ser142, and Ser143 each carry the phosphoserine modification. Positions 124–169 are disordered; the sequence is ENDPLRFKPHPSNMMSKLSSEDEEEDEAEDDQSEASGKKSVKGVSK. Over residues 144 to 156 the composition is skewed to acidic residues; that stretch reads EDEEEDEAEDDQS. The stretch at 181–205 forms a coiled coil; the sequence is YDETEAEREKKRLERAKRRALSSSV. Ser204 and Ser214 each carry phosphoserine. Positions 277 to 315 are disordered; it reads DISALTGGTVHLDEDQNPIKKRKKIPQKGRKKKGFRRRR. Over residues 295-315 the composition is skewed to basic residues; the sequence is IKKRKKIPQKGRKKKGFRRRR.

Belongs to the SAS10 family. As to quaternary structure, part of the small subunit (SSU) processome, composed of more than 70 proteins and the RNA chaperone small nucleolar RNA (snoRNA) U3. Interacts with CPEB1 and EIF4E.

Its subcellular location is the nucleus. It is found in the nucleolus. The protein localises to the chromosome. The protein resides in the centromere. It localises to the cytoplasm. Its subcellular location is the cell projection. It is found in the axon. The protein localises to the dendrite. The protein resides in the filopodium. Its function is as follows. Part of the small subunit (SSU) processome, first precursor of the small eukaryotic ribosomal subunit. During the assembly of the SSU processome in the nucleolus, many ribosome biogenesis factors, an RNA chaperone and ribosomal proteins associate with the nascent pre-rRNA and work in concert to generate RNA folding, modifications, rearrangements and cleavage as well as targeted degradation of pre-ribosomal RNA by the RNA exosome. Its dissociation from the complex determines the transition from state pre-A1 to state pre-A1*. Inhibits mRNA translation in a cytoplasmic polyadenylation element (CPE)-dependent manner. The sequence is that of Neuroguidin from Homo sapiens (Human).